Reading from the N-terminus, the 213-residue chain is MTKGILGRKIGMTQIFAENGDLIPVTVIHATPNVVLQKKTIENDGYEAIQLGFEDISEKRANKPQIGHAAKANTAPKRFIREIRGANIDEYEVGQEVKVDIFSEGEIVDVTGISKGKGFQGAIKRHGQSRGPMAHGSRYHRRPGSMGSIAPNRVFKTKNLPGRMGGERVTIQNLKIVKVDPERNLLLIKGNVPGPRKGLVIVKSAVKAAKKAK.

Residues 124–151 are disordered; that stretch reads KRHGQSRGPMAHGSRYHRRPGSMGSIAP.

This sequence belongs to the universal ribosomal protein uL3 family. Part of the 50S ribosomal subunit. Forms a cluster with proteins L14 and L19.

One of the primary rRNA binding proteins, it binds directly near the 3'-end of the 23S rRNA, where it nucleates assembly of the 50S subunit. The sequence is that of Large ribosomal subunit protein uL3 from Geobacillus kaustophilus (strain HTA426).